Here is a 316-residue protein sequence, read N- to C-terminus: L-lactate dehydrogenase (316 aa).

NAD(+)-binding positions include V15, D36, R41, Y66, and G80–A81. Residues Q83, R90, and N122–D125 each bind substrate. NAD(+) contacts are provided by residues A120–N122 and T145. Position 150–153 (D150–R153) interacts with substrate. Beta-D-fructose 1,6-bisphosphate is bound by residues R155 and H170. H177 acts as the Proton acceptor in catalysis. At Y222 the chain carries Phosphotyrosine. T231 serves as a coordination point for substrate. A disordered region spans residues D287–T316. A compositionally biased stretch (basic and acidic residues) spans E296–A310.

It belongs to the LDH/MDH superfamily. LDH family. In terms of assembly, homotetramer.

The protein localises to the cytoplasm. It carries out the reaction (S)-lactate + NAD(+) = pyruvate + NADH + H(+). Its pathway is fermentation; pyruvate fermentation to lactate; (S)-lactate from pyruvate: step 1/1. Allosterically activated by fructose 1,6-bisphosphate (FBP). Catalyzes the conversion of lactate to pyruvate. This is L-lactate dehydrogenase from Salinibacter ruber (strain DSM 13855 / M31).